Reading from the N-terminus, the 404-residue chain is Serine/threonine transporter SstT (404 aa).

The next 9 helical transmembrane spans lie at 12–32, 53–73, 81–101, 140–160, 177–197, 216–236, 287–307, 329–349, and 356–376; these read GGNL…LALV, AIAP…KEVG, ILVM…VLSF, ALAN…GIAL, AVSF…FGLV, LGVL…LIVF, VAIP…VTVL, IVAS…LLLI, and FNIP…IGVI.

Belongs to the dicarboxylate/amino acid:cation symporter (DAACS) (TC 2.A.23) family.

It is found in the cell inner membrane. It catalyses the reaction L-serine(in) + Na(+)(in) = L-serine(out) + Na(+)(out). The catalysed reaction is L-threonine(in) + Na(+)(in) = L-threonine(out) + Na(+)(out). Involved in the import of serine and threonine into the cell, with the concomitant import of sodium (symport system). The polypeptide is Serine/threonine transporter SstT (Actinobacillus pleuropneumoniae serotype 7 (strain AP76)).